An 879-amino-acid chain; its full sequence is Phosphoenolpyruvate carboxylase (879 aa).

Catalysis depends on residues His138 and Lys546.

It belongs to the PEPCase type 1 family. Mg(2+) is required as a cofactor.

It catalyses the reaction oxaloacetate + phosphate = phosphoenolpyruvate + hydrogencarbonate. In terms of biological role, forms oxaloacetate, a four-carbon dicarboxylic acid source for the tricarboxylic acid cycle. This chain is Phosphoenolpyruvate carboxylase, found in Pectobacterium atrosepticum (strain SCRI 1043 / ATCC BAA-672) (Erwinia carotovora subsp. atroseptica).